The chain runs to 129 residues: Transcriptional activator protein (129 aa).

The short motif at 13 to 28 is the Nuclear localization signal element; that stretch reads KAQHKIAKRRAVRRRR. The segment at 33–50 is a zinc-finger region; sequence CGCSIFLHINCADNGFTH. Residues 73–109 are disordered; sequence IFQDTTRRGPVVHQNQDLPHPSPVQPQPTESIGSPQS. A Phosphoserine; by host modification is found at serine 109. A transactivation region spans residues 115-129; sequence SLDDFDESFWADIFK.

This sequence belongs to the geminiviridae transcriptional activator protein family. In terms of assembly, monomer. Homodimer. Homooligomer. Self-interaction correlates with nuclear localization and efficient activation of transcription. Monomers suppress local silencing by interacting with and inactivating host adenosine kinase 2 (ADK2) in the cytoplasm. Interacts with and inhibits host SNF1 kinase. Binds to ssDNA. In terms of processing, phosphorylated at Ser-109 by A.thaliana KIN10.

It localises to the host nucleus. The protein resides in the host cytoplasm. Functionally, strong activator of the late viral genes promoters. Enhances the expression of the capsid protein and nuclear shuttle protein. Acts as a suppressor of RNA-mediated gene silencing, also known as post-transcriptional gene silencing (PTGS), a mechanism of plant viral defense that limits the accumulation of viral RNAs. Suppresses the host RNA silencing by inhibiting adenosine kinase 2 (ADK2), a kinase involved in a general methylation pathway. Also suppresses the host basal defense by interacting with and inhibiting SNF1 kinase, a key regulator of cell metabolism implicated in innate antiviral defense. Determines pathogenicity. The polypeptide is Transcriptional activator protein (Cabbage leaf curl virus (isolate Jamaica) (CaLCuV)).